A 173-amino-acid polypeptide reads, in one-letter code: Ribosome maturation factor RimM (173 aa).

The region spanning 92–165 (EGEFYHADLI…RVVIEAPAEI (74 aa)) is the PRC barrel domain.

The protein belongs to the RimM family. In terms of assembly, binds ribosomal protein uS19.

Its subcellular location is the cytoplasm. Functionally, an accessory protein needed during the final step in the assembly of 30S ribosomal subunit, possibly for assembly of the head region. Essential for efficient processing of 16S rRNA. May be needed both before and after RbfA during the maturation of 16S rRNA. It has affinity for free ribosomal 30S subunits but not for 70S ribosomes. The chain is Ribosome maturation factor RimM from Nitrobacter winogradskyi (strain ATCC 25391 / DSM 10237 / CIP 104748 / NCIMB 11846 / Nb-255).